The following is a 248-amino-acid chain: Superoxide dismutase [Mn] 1 (248 aa).

The first 41 residues, 1-41 (MQTTFRRILILFVGLLVPLFFACQSNSQVDAAPSAAPQLSA), serve as a signal peptide directing secretion. His-68, His-123, Asp-208, and His-212 together coordinate Mn(2+).

The protein belongs to the iron/manganese superoxide dismutase family. As to quaternary structure, homodimer. Requires Mn(2+) as cofactor.

It catalyses the reaction 2 superoxide + 2 H(+) = H2O2 + O2. In terms of biological role, destroys superoxide anion radicals which are normally produced within the cells and which are toxic to biological systems. The polypeptide is Superoxide dismutase [Mn] 1 (sodA1) (Leptolyngbya boryana (Plectonema boryanum)).